The following is a 235-amino-acid chain: MKLNVCYLEMVEYEDALHLQERLHKLRVANELEDTLLLLQHPPVITIGRRGKWENILISKEKLLQMGVKVFEVTRGGDVTYHGPGQIVGYPIFDLGTVGKDIKRFVWLLEEVFINLLKDEYGIEAYRDEKQYTGVWVGGEKIVAIGIAVKKWITMHGFAFNVNTNLEHFSWIIPCGLKDRGVTSLEKLLGHKVEFDDVVYKVAKYFGKVFGAKFRFISKEDLEEIIKIKVEDSER.

The 185-residue stretch at 30–214 (NELEDTLLLL…YFGKVFGAKF (185 aa)) folds into the BPL/LPL catalytic domain. Residues 75-82 (RGGDVTYH), 144-146 (AIG), and 157-159 (GFA) contribute to the substrate site. C175 (acyl-thioester intermediate) is an active-site residue.

It belongs to the LipB family.

Its subcellular location is the cytoplasm. The catalysed reaction is octanoyl-[ACP] + L-lysyl-[protein] = N(6)-octanoyl-L-lysyl-[protein] + holo-[ACP] + H(+). It participates in protein modification; protein lipoylation via endogenous pathway; protein N(6)-(lipoyl)lysine from octanoyl-[acyl-carrier-protein]: step 1/2. Catalyzes the transfer of endogenously produced octanoic acid from octanoyl-acyl-carrier-protein onto the lipoyl domains of lipoate-dependent enzymes. Lipoyl-ACP can also act as a substrate although octanoyl-ACP is likely to be the physiological substrate. The polypeptide is Octanoyltransferase (Caldicellulosiruptor saccharolyticus (strain ATCC 43494 / DSM 8903 / Tp8T 6331)).